A 353-amino-acid polypeptide reads, in one-letter code: Feruloyl esterase B (353 aa).

The first 18 residues, Met-1–Ala-18, serve as a signal peptide directing secretion. The interval Ala-19–Ile-291 is catalytic. Residue Ser-136 is the Charge relay system of the active site. Residues Asn-179 and Asn-246 are each glycosylated (N-linked (GlcNAc...) asparagine). A CBM1 domain is found at Cys-317–Leu-353.

This sequence belongs to the carbohydrate esterase 1 (CE1) family. Feruloyl esterase type B subfamily. In terms of processing, glycosylated.

Its subcellular location is the secreted. It catalyses the reaction feruloyl-polysaccharide + H2O = ferulate + polysaccharide.. Its activity is regulated as follows. Inhibited by the specific serine esterase inhibitor AEBSF. Functionally, involved in degradation of plant cell walls. Hydrolyzes the feruloyl-arabinose ester bond in arabinoxylans, and the feruloyl-galactose and feruloyl-arabinose ester bonds in pectin. Binds strongly to cellulose. In Talaromyces funiculosus (Fruitlet core rot fungus), this protein is Feruloyl esterase B (FAEB).